Here is a 256-residue protein sequence, read N- to C-terminus: Putative transcription factor 001R (256 aa).

Its function is as follows. Transcription activation. The chain is Putative transcription factor 001R from Frog virus 3 (isolate Goorha) (FV-3).